The primary structure comprises 506 residues: Protein MGF 505-9R (506 aa).

Belongs to the asfivirus MGF 505 family.

Its function is as follows. Plays a role in virus cell tropism, and may be required for efficient virus replication in macrophages. The polypeptide is Protein MGF 505-9R (African swine fever virus (isolate Tick/South Africa/Pretoriuskop Pr4/1996) (ASFV)).